The chain runs to 292 residues: Ribosomal RNA small subunit methyltransferase A (292 aa).

Positions 28, 30, 55, 76, 101, and 126 each coordinate S-adenosyl-L-methionine.

The protein belongs to the class I-like SAM-binding methyltransferase superfamily. rRNA adenine N(6)-methyltransferase family. RsmA subfamily.

The protein resides in the cytoplasm. The catalysed reaction is adenosine(1518)/adenosine(1519) in 16S rRNA + 4 S-adenosyl-L-methionine = N(6)-dimethyladenosine(1518)/N(6)-dimethyladenosine(1519) in 16S rRNA + 4 S-adenosyl-L-homocysteine + 4 H(+). Functionally, specifically dimethylates two adjacent adenosines (A1518 and A1519) in the loop of a conserved hairpin near the 3'-end of 16S rRNA in the 30S particle. May play a critical role in biogenesis of 30S subunits. In Bacillus cytotoxicus (strain DSM 22905 / CIP 110041 / 391-98 / NVH 391-98), this protein is Ribosomal RNA small subunit methyltransferase A.